The primary structure comprises 446 residues: N-succinylarginine dihydrolase 2 (446 aa).

Substrate-binding positions include 20–29, Asn-111, and 138–139; these read VGLSPGNLAS and HR. Glu-175 is an active-site residue. Arg-212 is a binding site for substrate. Residue His-246 is part of the active site. Residues Asp-248 and Asn-361 each coordinate substrate. The active-site Nucleophile is the Cys-367.

It belongs to the succinylarginine dihydrolase family. Homodimer.

It carries out the reaction N(2)-succinyl-L-arginine + 2 H2O + 2 H(+) = N(2)-succinyl-L-ornithine + 2 NH4(+) + CO2. Its pathway is amino-acid degradation; L-arginine degradation via AST pathway; L-glutamate and succinate from L-arginine: step 2/5. In terms of biological role, catalyzes the hydrolysis of N(2)-succinylarginine into N(2)-succinylornithine, ammonia and CO(2). The protein is N-succinylarginine dihydrolase 2 of Caulobacter vibrioides (strain ATCC 19089 / CIP 103742 / CB 15) (Caulobacter crescentus).